The chain runs to 188 residues: Apolipoprotein M (188 aa).

Positions 1–22 (MFHQIWAALLYLYGILLNSIYQ) form a signal peptide, not cleaved. 3 disulfide bridges follow: Cys-23–Cys-167, Cys-95–Cys-183, and Cys-128–Cys-157. Positions 136 and 143 each coordinate tetradecanoate.

It belongs to the calycin superfamily. Lipocalin family. Highly divergent. As to quaternary structure, interacts with LRP2; LRP2 mediates APOM renal uptake and subsequent lysosomal degradation.

The protein localises to the secreted. Probably involved in lipid transport. Can bind sphingosine-1-phosphate, myristic acid, palmitic acid and stearic acid, retinol, all-trans-retinoic acid and 9-cis-retinoic acid. This is Apolipoprotein M (APOM) from Sus scrofa (Pig).